A 237-amino-acid polypeptide reads, in one-letter code: Ribonuclease PH (237 aa).

Phosphate-binding positions include R86 and 124–126; that span reads GTR.

The protein belongs to the RNase PH family. Homohexameric ring arranged as a trimer of dimers.

The enzyme catalyses tRNA(n+1) + phosphate = tRNA(n) + a ribonucleoside 5'-diphosphate. Its function is as follows. Phosphorolytic 3'-5' exoribonuclease that plays an important role in tRNA 3'-end maturation. Removes nucleotide residues following the 3'-CCA terminus of tRNAs; can also add nucleotides to the ends of RNA molecules by using nucleoside diphosphates as substrates, but this may not be physiologically important. Probably plays a role in initiation of 16S rRNA degradation (leading to ribosome degradation) during starvation. The polypeptide is Ribonuclease PH (Shewanella sediminis (strain HAW-EB3)).